Here is a 394-residue protein sequence, read N- to C-terminus: Xylose isomerase (394 aa).

Active-site residues include H54 and D57. E181, E217, H220, D245, D255, D257, and D292 together coordinate Mg(2+).

This sequence belongs to the xylose isomerase family. As to quaternary structure, homotetramer. It depends on Mg(2+) as a cofactor.

The protein resides in the cytoplasm. It carries out the reaction alpha-D-xylose = alpha-D-xylulofuranose. In Actinoplanes sp. (strain ATCC 31351 / 3876) (Ampullariella sp.), this protein is Xylose isomerase (xylA).